Here is a 40-residue protein sequence, read N- to C-terminus: uncharacterized protein (40 aa).

Residues 20 to 37 form a helical membrane-spanning segment; it reads TYLYWTAVTAAYLTYLTI.

It is found in the membrane. This is an uncharacterized protein from Archaeoglobus fulgidus (strain ATCC 49558 / DSM 4304 / JCM 9628 / NBRC 100126 / VC-16).